A 317-amino-acid chain; its full sequence is Acetyl-coenzyme A carboxylase carboxyl transferase subunit alpha (317 aa).

A CoA carboxyltransferase C-terminal domain is found at 40 to 293 (LEKRSADALK…GDIIAASLRS (254 aa)).

Belongs to the AccA family. Acetyl-CoA carboxylase is a heterohexamer composed of biotin carboxyl carrier protein (AccB), biotin carboxylase (AccC) and two subunits each of ACCase subunit alpha (AccA) and ACCase subunit beta (AccD).

Its subcellular location is the cytoplasm. The catalysed reaction is N(6)-carboxybiotinyl-L-lysyl-[protein] + acetyl-CoA = N(6)-biotinyl-L-lysyl-[protein] + malonyl-CoA. Its pathway is lipid metabolism; malonyl-CoA biosynthesis; malonyl-CoA from acetyl-CoA: step 1/1. Its function is as follows. Component of the acetyl coenzyme A carboxylase (ACC) complex. First, biotin carboxylase catalyzes the carboxylation of biotin on its carrier protein (BCCP) and then the CO(2) group is transferred by the carboxyltransferase to acetyl-CoA to form malonyl-CoA. The sequence is that of Acetyl-coenzyme A carboxylase carboxyl transferase subunit alpha from Brucella abortus (strain S19).